The sequence spans 214 residues: Probable transaldolase (214 aa).

K83 functions as the Schiff-base intermediate with substrate in the catalytic mechanism.

It belongs to the transaldolase family. Type 3B subfamily.

It is found in the cytoplasm. The enzyme catalyses D-sedoheptulose 7-phosphate + D-glyceraldehyde 3-phosphate = D-erythrose 4-phosphate + beta-D-fructose 6-phosphate. The protein operates within carbohydrate degradation; pentose phosphate pathway; D-glyceraldehyde 3-phosphate and beta-D-fructose 6-phosphate from D-ribose 5-phosphate and D-xylulose 5-phosphate (non-oxidative stage): step 2/3. Functionally, transaldolase is important for the balance of metabolites in the pentose-phosphate pathway. In Desulfotalea psychrophila (strain LSv54 / DSM 12343), this protein is Probable transaldolase.